The following is a 494-amino-acid chain: Glutamyl-tRNA(Gln) amidotransferase subunit A (494 aa).

Residues Lys81 and Ser156 each act as charge relay system in the active site. Ser180 functions as the Acyl-ester intermediate in the catalytic mechanism.

The protein belongs to the amidase family. GatA subfamily. In terms of assembly, heterotrimer of A, B and C subunits.

It catalyses the reaction L-glutamyl-tRNA(Gln) + L-glutamine + ATP + H2O = L-glutaminyl-tRNA(Gln) + L-glutamate + ADP + phosphate + H(+). In terms of biological role, allows the formation of correctly charged Gln-tRNA(Gln) through the transamidation of misacylated Glu-tRNA(Gln) in organisms which lack glutaminyl-tRNA synthetase. The reaction takes place in the presence of glutamine and ATP through an activated gamma-phospho-Glu-tRNA(Gln). This is Glutamyl-tRNA(Gln) amidotransferase subunit A from Mycobacterium bovis (strain ATCC BAA-935 / AF2122/97).